A 111-amino-acid chain; its full sequence is Gastrula zinc finger protein XlCGF32.1 (111 aa).

4 consecutive C2H2-type zinc fingers follow at residues 6–28 (FDCT…FLCH), 34–56 (FVCV…LRIH), 62–84 (SVCP…MRIH), and 89–111 (FMCS…LQIH).

It belongs to the krueppel C2H2-type zinc-finger protein family.

The protein localises to the nucleus. May be involved in transcriptional regulation. This chain is Gastrula zinc finger protein XlCGF32.1, found in Xenopus laevis (African clawed frog).